The following is a 413-amino-acid chain: Wilms tumor protein homolog (413 aa).

Residues Lys56 and Lys159 each participate in a glycyl lysine isopeptide (Lys-Gly) (interchain with G-Cter in SUMO) cross-link. A 9aaTAD motif is present at residues 218–226; it reads MTWNQMNLG. C2H2-type zinc fingers lie at residues 290 to 314, 320 to 344, 350 to 372, and 378 to 402; these read FMCAYPGCNKRYFKLSHLQMHSRKH, YQCDFKDCERRFSRSDQLKRHQRRH, FQCKTCQRKFSRSDHLKTHTRTH, and FSCRWPSCQKKFARSDELVRHHNMH. 2 important for interaction with target DNA regions span residues 334-348 and 360-368; these read SDQLKRHQRRHTGIK and SRSDHLKTH.

This sequence belongs to the EGR C2H2-type zinc-finger protein family.

It localises to the nucleus. The protein localises to the cytoplasm. The protein resides in the nucleus speckle. Transcription factor required for development of the vascular component of the pronephric kidney, the glomus; may repress tubule-specific gene expression in the portion of the pronephros fated to form the glomus. Recognizes and binds to the DNA sequence 5'-GCG(T/G)GGGCG-3'. Inhibits Wnt-signaling during embryonic development. In Xenopus tropicalis (Western clawed frog), this protein is Wilms tumor protein homolog (wt1).